The sequence spans 240 residues: Purine nucleoside phosphorylase RP494 (240 aa).

Positions 60, 96, and 113 each coordinate Zn(2+).

It belongs to the purine nucleoside phosphorylase YfiH/LACC1 family. In terms of assembly, homodimer. Cu(2+) serves as cofactor. It depends on Zn(2+) as a cofactor.

It carries out the reaction adenosine + phosphate = alpha-D-ribose 1-phosphate + adenine. The catalysed reaction is S-methyl-5'-thioadenosine + phosphate = 5-(methylsulfanyl)-alpha-D-ribose 1-phosphate + adenine. The enzyme catalyses inosine + phosphate = alpha-D-ribose 1-phosphate + hypoxanthine. It catalyses the reaction adenosine + H2O + H(+) = inosine + NH4(+). Purine nucleoside enzyme that catalyzes the phosphorolysis of adenosine and inosine nucleosides, yielding D-ribose 1-phosphate and the respective free bases, adenine and hypoxanthine. Also catalyzes the phosphorolysis of S-methyl-5'-thioadenosine into adenine and S-methyl-5-thio-alpha-D-ribose 1-phosphate. Also has adenosine deaminase activity. The polypeptide is Purine nucleoside phosphorylase RP494 (Rickettsia prowazekii (strain Madrid E)).